The primary structure comprises 257 residues: Putative hydro-lyase Bcenmc03_3969 (257 aa).

Belongs to the D-glutamate cyclase family.

The chain is Putative hydro-lyase Bcenmc03_3969 from Burkholderia orbicola (strain MC0-3).